Consider the following 363-residue polypeptide: uncharacterized protein (363 aa).

This is an uncharacterized protein from Methanocaldococcus jannaschii (strain ATCC 43067 / DSM 2661 / JAL-1 / JCM 10045 / NBRC 100440) (Methanococcus jannaschii).